A 682-amino-acid chain; its full sequence is Zinc finger protein 16 (682 aa).

Over residues 1–10 (MPSLRTRREE) the composition is skewed to basic and acidic residues. A disordered region spans residues 1-38 (MPSLRTRREEAEMELSAPGPSPWTPAAQARVSDAPAVT). A necessary for transcription activation region spans residues 62–210 (YQQPDCDTRT…GVPTAESPLI (149 aa)). The C2H2-type 1; degenerate zinc-finger motif lies at 209–231 (LICNECGKTFRGNPDLIQRQIVH). The segment at 237–259 (FMCDDCGKTFSQNSVLKNRHRSH) adopts a C2H2-type 2; degenerate zinc-finger fold. A Glycyl lysine isopeptide (Lys-Gly) (interchain with G-Cter in SUMO2) cross-link involves residue K253. C2H2-type zinc fingers lie at residues 265 to 287 (YQCSECGKAFRGHSDFSRHQSHH), 293 to 315 (YTCTECGKAFSQNSSLKKHQKSH), 321 to 343 (YECNECGKAFRRSSNLIQHQRIH), 349 to 371 (YVCSECGKAFRRSSNLIKHHRTH), 377 to 399 (FECGECGKAFSQSAHLRKHQRVH), 405 to 427 (YECNDCGKPFSRVSNLIKHHRVH), 433 to 455 (YKCSDCGKXFSQSSSLIQHRRIH), and 461 to 483 (HVCNVCGKAFSYSSVLRKHQIIH). 2 required for nuclear localization regions span residues 268–393 (SECG…AHLR) and 341–373 (RIHSGEKPYVCSECGKAFRRSSNLIKHHRTHTG). Positions 473-503 (SSVLRKHQIIHTGEKPYRCSVCGKAFSHSSA) are required for nuclear localization. K487 is modified (N6-acetyllysine). 7 C2H2-type zinc fingers span residues 489–511 (YRCSVCGKAFSHSSALIQHQGVH), 517–539 (YACHECGKTFGRSSNLILHQRVH), 545–567 (YECTECGKTFSQSSTLIQHQRIH), 573–595 (HECNQCGKAFNRSSNLIHHQKVH), 601–623 (YTCVECGKGFSQSSHLIQHQIIH), 629–651 (YKCSECGKAFSQRSVLIQHQRIH), and 657–679 (YDCAACGKAFSQRSKLIKHQLIH).

This sequence belongs to the krueppel C2H2-type zinc-finger protein family. In terms of assembly, interacts with INCA1; the interaction inhibits INCA1 activity and induces the cell cycle process.

Its subcellular location is the nucleus. Its function is as follows. Acts as a transcriptional activator. Promotes cell proliferation by facilitating the cell cycle phase transition from the S to G2/M phase. Involved in both the hemin- and phorbol myristate acetate (PMA)-induced erythroid and megakaryocytic differentiation, respectively. Also plays a role as an inhibitor of cell apoptosis. This chain is Zinc finger protein 16 (ZNF16), found in Pan troglodytes (Chimpanzee).